We begin with the raw amino-acid sequence, 147 residues long: Small ribosomal subunit protein eS19 (147 aa).

The protein belongs to the eukaryotic ribosomal protein eS19 family. In terms of assembly, component of the small ribosomal subunit.

It is found in the cytoplasm. Its subcellular location is the nucleus. Functionally, component of the small ribosomal subunit. The ribosome is a large ribonucleoprotein complex responsible for the synthesis of proteins in the cell. Required for pre-rRNA processing and maturation of 40S ribosomal subunits. The sequence is that of Small ribosomal subunit protein eS19 (rps19) from Gillichthys mirabilis (Long-jawed mudsucker).